The chain runs to 197 residues: Imidazoleglycerol-phosphate dehydratase (197 aa).

This sequence belongs to the imidazoleglycerol-phosphate dehydratase family.

Its subcellular location is the cytoplasm. The catalysed reaction is D-erythro-1-(imidazol-4-yl)glycerol 3-phosphate = 3-(imidazol-4-yl)-2-oxopropyl phosphate + H2O. Its pathway is amino-acid biosynthesis; L-histidine biosynthesis; L-histidine from 5-phospho-alpha-D-ribose 1-diphosphate: step 6/9. This Streptomyces avermitilis (strain ATCC 31267 / DSM 46492 / JCM 5070 / NBRC 14893 / NCIMB 12804 / NRRL 8165 / MA-4680) protein is Imidazoleglycerol-phosphate dehydratase.